The primary structure comprises 177 residues: Large ribosomal subunit protein uL22 (177 aa).

The disordered stretch occupies residues 118–177; sequence VESRPSREGRRGGAGESAGGARARRAQGSKAAAAKKAPASSSKKAATTTEASEEAKGGSQ. A compositionally biased stretch (basic and acidic residues) spans 121 to 130; that stretch reads RPSREGRRGG. Residues 145-167 show a composition bias toward low complexity; the sequence is GSKAAAAKKAPASSSKKAATTTE.

Belongs to the universal ribosomal protein uL22 family. As to quaternary structure, part of the 50S ribosomal subunit.

Its function is as follows. This protein binds specifically to 23S rRNA; its binding is stimulated by other ribosomal proteins, e.g. L4, L17, and L20. It is important during the early stages of 50S assembly. It makes multiple contacts with different domains of the 23S rRNA in the assembled 50S subunit and ribosome. The globular domain of the protein is located near the polypeptide exit tunnel on the outside of the subunit, while an extended beta-hairpin is found that lines the wall of the exit tunnel in the center of the 70S ribosome. The protein is Large ribosomal subunit protein uL22 of Mycobacterium sp. (strain KMS).